A 366-amino-acid chain; its full sequence is Inositol 2-dehydrogenase (366 aa).

It belongs to the Gfo/Idh/MocA family. In terms of assembly, homotetramer.

The enzyme catalyses myo-inositol + NAD(+) = scyllo-inosose + NADH + H(+). Involved in the oxidation of myo-inositol (MI) to 2-keto-myo-inositol (2KMI or 2-inosose). The polypeptide is Inositol 2-dehydrogenase (Rhodococcus jostii (strain RHA1)).